The primary structure comprises 181 residues: Large ribosomal subunit protein uL5c (181 aa).

The protein belongs to the universal ribosomal protein uL5 family. Part of the 50S ribosomal subunit; contacts the 5S rRNA.

It is found in the plastid. Functionally, binds 5S rRNA, forms part of the central protuberance of the 50S subunit. The polypeptide is Large ribosomal subunit protein uL5c (rpl5) (Helicosporidium sp. subsp. Simulium jonesii (Green alga)).